We begin with the raw amino-acid sequence, 1156 residues long: Chromosome partition protein Smc (1156 aa).

37–44 (PNGAGKSN) is an ATP binding site. The stretch at 167–499 (SGIGEYERKK…AIEREVRSFS (333 aa)) forms a coiled coil. One can recognise an SMC hinge domain in the interval 509 to 624 (KGVYGSVSEL…VENFESAKAI (116 aa)). The stretch at 654–1001 (GELNKRYYEE…EETENKKRKV (348 aa)) forms a coiled coil.

It belongs to the SMC family. Homodimer.

The protein resides in the cytoplasm. Its function is as follows. Required for chromosome condensation and partitioning. This chain is Chromosome partition protein Smc, found in Aquifex aeolicus (strain VF5).